The sequence spans 460 residues: Cysteine--tRNA ligase (460 aa).

Cys-29 provides a ligand contact to Zn(2+). Residues 31–41 carry the 'HIGH' region motif; the sequence is PTVYDFAHIGN. Zn(2+) is bound by residues Cys-227, His-252, and Glu-256. Positions 285–289 match the 'KMSKS' region motif; that stretch reads KMSKS. ATP is bound at residue Lys-288.

This sequence belongs to the class-I aminoacyl-tRNA synthetase family. In terms of assembly, monomer. Zn(2+) is required as a cofactor.

It is found in the cytoplasm. The enzyme catalyses tRNA(Cys) + L-cysteine + ATP = L-cysteinyl-tRNA(Cys) + AMP + diphosphate. The protein is Cysteine--tRNA ligase of Bradyrhizobium diazoefficiens (strain JCM 10833 / BCRC 13528 / IAM 13628 / NBRC 14792 / USDA 110).